Consider the following 497-residue polypeptide: Tyrosine-protein kinase SPK-1 (497 aa).

The segment at 1–25 (MGQKFSIKCKKQSKNKNTSKCQKIP) is disordered. In terms of domain architecture, SH3 spans 33–94 (PGSYMVKAKY…PSNYVSKQDG (62 aa)). Residues 100-200 (EAWREIQRWE…NTHIPLTDPM (101 aa)) form the SH2 domain. A Protein kinase domain is found at 220 to 482 (IEILNEIGRG…LVLQEKMDLL (263 aa)). Residues 226-234 (IGRGFFGSV) and lysine 248 contribute to the ATP site. Catalysis depends on aspartate 342, which acts as the Proton acceptor.

Belongs to the protein kinase superfamily. Tyr protein kinase family.

The catalysed reaction is L-tyrosyl-[protein] + ATP = O-phospho-L-tyrosyl-[protein] + ADP + H(+). This chain is Tyrosine-protein kinase SPK-1, found in Girardia tigrina (Planarian).